The sequence spans 494 residues: UPF0371 protein SPJ_0333 (494 aa).

The protein belongs to the UPF0371 family.

The protein is UPF0371 protein SPJ_0333 of Streptococcus pneumoniae (strain JJA).